The following is a 594-amino-acid chain: NADH-quinone oxidoreductase subunit C/D (594 aa).

Positions 1-185 (MTTGSALYIP…DPFSLNLAKQ (185 aa)) are NADH dehydrogenase I subunit C. The NADH dehydrogenase I subunit D stretch occupies residues 209 to 594 (DYMFLNLGPN…IDFVMADVDR (386 aa)).

In the N-terminal section; belongs to the complex I 30 kDa subunit family. It in the C-terminal section; belongs to the complex I 49 kDa subunit family. In terms of assembly, NDH-1 is composed of 13 different subunits. Subunits NuoB, CD, E, F, and G constitute the peripheral sector of the complex.

Its subcellular location is the cell inner membrane. The enzyme catalyses a quinone + NADH + 5 H(+)(in) = a quinol + NAD(+) + 4 H(+)(out). Its function is as follows. NDH-1 shuttles electrons from NADH, via FMN and iron-sulfur (Fe-S) centers, to quinones in the respiratory chain. The immediate electron acceptor for the enzyme in this species is believed to be ubiquinone. Couples the redox reaction to proton translocation (for every two electrons transferred, four hydrogen ions are translocated across the cytoplasmic membrane), and thus conserves the redox energy in a proton gradient. In Pseudomonas fluorescens (strain Pf0-1), this protein is NADH-quinone oxidoreductase subunit C/D.